The sequence spans 108 residues: Tetrahydromethanopterin S-methyltransferase subunit B (108 aa).

A helical membrane pass occupies residues 79–99; it reads GMFFGFWVTMAILVLVTILAV.

Belongs to the MtrB family. The complex is composed of 8 subunits; MtrA, MtrB, MtrC, MtrD, MtrE, MtrF, MtrG and MtrH.

It is found in the cell membrane. The enzyme catalyses 5-methyl-5,6,7,8-tetrahydromethanopterin + coenzyme M + 2 Na(+)(in) = 5,6,7,8-tetrahydromethanopterin + methyl-coenzyme M + 2 Na(+)(out). The protein operates within one-carbon metabolism; methanogenesis from CO(2); methyl-coenzyme M from 5,10-methylene-5,6,7,8-tetrahydromethanopterin: step 2/2. Its function is as follows. Part of a complex that catalyzes the formation of methyl-coenzyme M and tetrahydromethanopterin from coenzyme M and methyl-tetrahydromethanopterin. This is an energy-conserving, sodium-ion translocating step. This is Tetrahydromethanopterin S-methyltransferase subunit B from Methanococcus maripaludis (strain C5 / ATCC BAA-1333).